The primary structure comprises 132 residues: Subtelomeric hrmA-associated cluster protein AFUB_079000 (132 aa).

Its function is as follows. Part of the subtelomeric hrmA-associated cluster (HAC) containing genes that alter the hyphal surface (such as reduced total chitin or increased beta-glucan exposure) and perturb inter-hyphal interactions within the developing biofilms, resulting in a loss of vertically aligned polarized growing filaments. Consequently, this hypoxia-typic morphotype (called H-MORPH) with altered biofilm architecture leads to increased hypoxia fitness, increased host inflammation, rapid disease progression, and mortality in a murine model of invasive aspergillosis. This Aspergillus fumigatus (strain CBS 144.89 / FGSC A1163 / CEA10) (Neosartorya fumigata) protein is Subtelomeric hrmA-associated cluster protein AFUB_079000.